A 396-amino-acid polypeptide reads, in one-letter code: Enoyl-[acyl-carrier-protein] reductase [NADH] (396 aa).

Residues 47 to 52, 73 to 74, 110 to 111, and 138 to 139 contribute to the NAD(+) site; these read GASTGF, FE, DA, and LA. Tyr-224 contributes to the substrate binding site. Tyr-234 (proton donor) is an active-site residue. NAD(+) is bound by residues Lys-243 and 272-274; that span reads LVT.

Belongs to the TER reductase family. Monomer.

The enzyme catalyses a 2,3-saturated acyl-[ACP] + NAD(+) = a (2E)-enoyl-[ACP] + NADH + H(+). The protein operates within lipid metabolism; fatty acid biosynthesis. Functionally, involved in the final reduction of the elongation cycle of fatty acid synthesis (FAS II). Catalyzes the reduction of a carbon-carbon double bond in an enoyl moiety that is covalently linked to an acyl carrier protein (ACP). The protein is Enoyl-[acyl-carrier-protein] reductase [NADH] of Flavobacterium psychrophilum (strain ATCC 49511 / DSM 21280 / CIP 103535 / JIP02/86).